A 392-amino-acid chain; its full sequence is Induced during hyphae development protein 1 (392 aa).

The signal sequence occupies residues 1-16 (MRPTPLFFALLQIALA). Residues N75, N139, and N155 are each glycosylated (N-linked (GlcNAc...) asparagine). Residues 95–375 (QGQSTSGDAN…STRSGGFAAT (281 aa)) are disordered. Residues 96-147 (GQSTSGDANAATNSNDATGTATDAAAATNGNDGASGTADANNANNTDGSGAT) are compositionally biased toward low complexity. A compositionally biased stretch (polar residues) spans 148–161 (DASNTNNNGSTDTV). A compositionally biased stretch (low complexity) spans 162–191 (NTNTAGSGSSETTAAAGAAAGTAAGTNSAS). A glycan (N-linked (GlcNAc...) asparagine) is linked at N195. Residues 199 to 232 (SDATNAATGSDASGTAATNTASTASGATSGSGSD) are compositionally biased toward low complexity. Residues 237–250 (TGTNTDSDSDTATK) are compositionally biased toward polar residues. Over residues 251-371 (GSDATAGSMT…GSGSSTRSGG (121 aa)) the composition is skewed to low complexity. 3 N-linked (GlcNAc...) asparagine glycosylation sites follow: N270, N274, and N294. S363 carries GPI-anchor amidated serine lipidation. The propeptide at 364-392 (GSSTRSGGFAATIPTVTFGSLVALALNLL) is removed in mature form.

Belongs to the IHD1 family. Post-translationally, the GPI-anchor is attached to the protein in the endoplasmic reticulum and serves to target the protein to the cell surface. There, the glucosamine-inositol phospholipid moiety is cleaved off and the GPI-modified mannoprotein is covalently attached via its lipidless GPI glycan remnant to the 1,6-beta-glucan of the outer cell wall layer.

Its subcellular location is the secreted. The protein localises to the cell wall. It localises to the membrane. Functionally, GPI-anchored cell wall protein that may be involved in cell wall organization, hyphal growth, as well as in virulence. The sequence is that of Induced during hyphae development protein 1 (IHD1) from Candida albicans (strain SC5314 / ATCC MYA-2876) (Yeast).